The chain runs to 212 residues: ATP synthase F(0) complex subunit a (212 aa).

6 helical membrane passes run 3–23 (MMGI…MFTS), 58–78 (WAAM…LGLL), 87–107 (QLSM…LTGL), 128–148 (IPLL…ALGV), 154–174 (LTAG…LMPT), and 179–199 (ALST…VAMI).

The protein belongs to the ATPase A chain family. Component of the ATP synthase complex composed at least of ATP5F1A/subunit alpha, ATP5F1B/subunit beta, ATP5MC1/subunit c (homooctomer), MT-ATP6/subunit a, MT-ATP8/subunit 8, ATP5ME/subunit e, ATP5MF/subunit f, ATP5MG/subunit g, ATP5MK/subunit k, ATP5MJ/subunit j, ATP5F1C/subunit gamma, ATP5F1D/subunit delta, ATP5F1E/subunit epsilon, ATP5PF/subunit F6, ATP5PB/subunit b, ATP5PD/subunit d, ATP5PO/subunit OSCP. ATP synthase complex consists of a soluble F(1) head domain (subunits alpha(3) and beta(3)) - the catalytic core - and a membrane F(0) domain - the membrane proton channel (subunits c, a, 8, e, f, g, k and j). These two domains are linked by a central stalk (subunits gamma, delta, and epsilon) rotating inside the F1 region and a stationary peripheral stalk (subunits F6, b, d, and OSCP). Interacts with DNAJC30; interaction is direct.

It localises to the mitochondrion inner membrane. It catalyses the reaction H(+)(in) = H(+)(out). In terms of biological role, subunit a, of the mitochondrial membrane ATP synthase complex (F(1)F(0) ATP synthase or Complex V) that produces ATP from ADP in the presence of a proton gradient across the membrane which is generated by electron transport complexes of the respiratory chain. ATP synthase complex consist of a soluble F(1) head domain - the catalytic core - and a membrane F(1) domain - the membrane proton channel. These two domains are linked by a central stalk rotating inside the F(1) region and a stationary peripheral stalk. During catalysis, ATP synthesis in the catalytic domain of F(1) is coupled via a rotary mechanism of the central stalk subunits to proton translocation. With the subunit c (ATP5MC1), forms the proton-conducting channel in the F(0) domain, that contains two crucial half-channels (inlet and outlet) that facilitate proton movement from the mitochondrial intermembrane space (IMS) into the matrix. Protons are taken up via the inlet half-channel and released through the outlet half-channel, following a Grotthuss mechanism. The chain is ATP synthase F(0) complex subunit a from Tropidurus montanus (Lizard).